We begin with the raw amino-acid sequence, 335 residues long: N-acetylmuramoyl-L-alanine amidase sle1 (335 aa).

Positions 1–25 (MQKKVIAAIIGTSAISAVAATQANA) are cleaved as a signal peptide. Positions 27-70 (TTHTVKPGESVWAISNKYGISIAKLKSLNNLTSNLIFPNQVLKV) constitute a LysM 1 domain. Residues 71–86 (SGSSNSTSNSSRPSTN) are compositionally biased toward low complexity. Positions 71–90 (SGSSNSTSNSSRPSTNSGGG) are disordered. 2 LysM domains span residues 91-134 (SYYT…KLKV) and 158-201 (SYYT…KLKV). In terms of domain architecture, Peptidase C51 spans 211 to 335 (ASATTTNRGY…YQVNNYRYIH (125 aa)).

The protein resides in the secreted. It is found in the cell surface. The catalysed reaction is Hydrolyzes the link between N-acetylmuramoyl residues and L-amino acid residues in certain cell-wall glycopeptides.. Its function is as follows. Peptidoglycan hydrolase involved in the splitting of the septum during cell division. In Staphylococcus aureus (strain bovine RF122 / ET3-1), this protein is N-acetylmuramoyl-L-alanine amidase sle1 (sle1).